Reading from the N-terminus, the 212-residue chain is Probable GH family 25 lysozyme 2 (212 aa).

The N-terminal stretch at 1 to 19 (MRFIALLISFFALLKVISA) is a signal peptide. In terms of domain architecture, Ch-type lysozyme spans 20 to 212 (ISGVDISSAS…GLGFDLNWYP (193 aa)). Residues aspartate 24, aspartate 112, and glutamate 114 contribute to the active site.

Belongs to the glycosyl hydrolase 25 family.

It is found in the secreted. The enzyme catalyses Hydrolysis of (1-&gt;4)-beta-linkages between N-acetylmuramic acid and N-acetyl-D-glucosamine residues in a peptidoglycan and between N-acetyl-D-glucosamine residues in chitodextrins.. The sequence is that of Probable GH family 25 lysozyme 2 from Dictyostelium discoideum (Social amoeba).